Here is a 597-residue protein sequence, read N- to C-terminus: Chaperonin 60 subunit beta 3, chloroplastic (597 aa).

Residues 1-20 (MASTFSATSSMGSSLAPPSN) are disordered. A chloroplast-targeting transit peptide spans 1–29 (MASTFSATSSMGSSLAPPSNRLSSFVSIS). Phosphoserine is present on residues Ser-97 and Ser-474. Positions 387-489 (STEEVVKKRV…KETLANDEEK (103 aa)) form a coiled coil.

Belongs to the chaperonin (HSP60) family. As to quaternary structure, part of the Cpn60 complex composed of 7 alpha and 7 beta subunits. Can also form a complex composed of 14 beta subunits only. Both complexes show ATPase activity. The Cpn60 complex interacts with the Cpn10 complex.

It localises to the plastid. The protein localises to the chloroplast. Its function is as follows. Involved in protein assisted folding. The polypeptide is Chaperonin 60 subunit beta 3, chloroplastic (CPN60B3) (Arabidopsis thaliana (Mouse-ear cress)).